The chain runs to 431 residues: Glutamate-1-semialdehyde 2,1-aminomutase (431 aa).

Residue Lys-269 is modified to N6-(pyridoxal phosphate)lysine.

This sequence belongs to the class-III pyridoxal-phosphate-dependent aminotransferase family. HemL subfamily. In terms of assembly, homodimer. The cofactor is pyridoxal 5'-phosphate.

Its subcellular location is the cytoplasm. It carries out the reaction (S)-4-amino-5-oxopentanoate = 5-aminolevulinate. It participates in porphyrin-containing compound metabolism; protoporphyrin-IX biosynthesis; 5-aminolevulinate from L-glutamyl-tRNA(Glu): step 2/2. In Francisella tularensis subsp. holarctica (strain FTNF002-00 / FTA), this protein is Glutamate-1-semialdehyde 2,1-aminomutase.